We begin with the raw amino-acid sequence, 89 residues long: Helix-loop-helix protein 15 (89 aa).

Residues 1–32 (MLMEDGGLDTTSEEYRKLSKAERRKRRRATPK) are disordered. Residues 22 to 32 (ERRKRRRATPK) show a composition bias toward basic residues. The tract at residues 32–45 (KYRNLHATRERIRV) is basic motif. One can recognise a bHLH domain in the interval 32-84 (KYRNLHATRERIRVESFNMAFSQLRALLPTLPVEKKLSKIEILRFSIAYISFL). Residues 46–84 (ESFNMAFSQLRALLPTLPVEKKLSKIEILRFSIAYISFL) form a helix-loop-helix motif region.

As to expression, expressed in sensory head neurons of the lateral ganglion.

The protein localises to the nucleus. Functionally, transcription factor which binds the E box motif 5'-CA[TC][AG]TG-3'. Involved in modulating physiological aging, probably by regulating expression of branched-chain amino acid transferase-1, bcat-1. The chain is Helix-loop-helix protein 15 from Caenorhabditis elegans.